The chain runs to 1350 residues: ABC-type transporter MDR1 (1350 aa).

A compositionally biased stretch (basic and acidic residues) spans 1–11 (MDTVHEGHHGS). A disordered region spans residues 1-84 (MDTVHEGHHG…DEGEDPFAHL (84 aa)). The segment covering 22-33 (VEVTNYEKTQLG) has biased composition (polar residues). A compositionally biased stretch (basic residues) spans 52–63 (KKHKSQKEKKHK). The region spanning 121 to 411 (VLSALSSIIG…VAPNIQAFTT (291 aa)) is the ABC transmembrane type-1 1 domain. Helical transmembrane passes span 124–144 (ALSS…FGGL), 170–190 (LYFL…TAGF), 243–263 (KVGL…VSFI), 271–291 (ILMS…GFIV), 350–370 (GSMI…AFWM), and 380–400 (IEVG…FALG). The region spanning 446–691 (IELRNIRHIY…QGAYYNLVEA (246 aa)) is the ABC transporter 1 domain. 481–488 (GESGSGKS) provides a ligand contact to ATP. The span at 712 to 731 (KDQNLKHETTKGEQPEDGLK) shows a compositional bias: basic and acidic residues. Positions 712 to 734 (KDQNLKHETTKGEQPEDGLKLAR) are disordered. 6 helical membrane-spanning segments follow: residues 779–799 (IGII…VFFA), 830–850 (FMLA…FAVC), 903–923 (LGTI…SLAI), 929–949 (LVCI…FWML), 1014–1034 (ASQS…GTLI), and 1044–1064 (FFLC…IFSF). Residues 779–1070 (IGIICSVITG…IFSFAPDMGK (292 aa)) enclose the ABC transmembrane type-1 2 domain. Positions 1105–1343 (IEFRDVHFRY…RGRYWELVNL (239 aa)) constitute an ABC transporter 2 domain. Asn-1127 carries an N-linked (GlcNAc...) asparagine glycan. ATP is bound at residue 1140-1147 (GASGCGKS).

This sequence belongs to the ABC transporter superfamily. ABCB family. Multidrug resistance exporter (TC 3.A.1.201) subfamily.

The protein localises to the cell membrane. ABC-type transporter that is involved in the secretion of liamocins, glycolipids (also called heavy oils) composed of a single mannitol or arabitol headgroup linked to either three, four or even six 3,5-dihydroxydecanoic ester tail-groups. This Aureobasidium melanogenum (Aureobasidium pullulans var. melanogenum) protein is ABC-type transporter MDR1.